A 369-amino-acid polypeptide reads, in one-letter code: Uroporphyrinogen decarboxylase (369 aa).

Residues Arg-39, Ala-41, Arg-43, Arg-52, Asp-88, Tyr-166, Ser-221, and His-341 each coordinate coproporphyrinogen I. The coproporphyrinogen III site is built by Arg-39, Ala-41, and Arg-43. Residues Asp-88, Tyr-166, Ser-221, and His-341 each contribute to the coproporphyrinogen III site.

This sequence belongs to the uroporphyrinogen decarboxylase family. Homodimer.

Its subcellular location is the cytoplasm. The protein resides in the cytosol. It catalyses the reaction uroporphyrinogen III + 4 H(+) = coproporphyrinogen III + 4 CO2. It carries out the reaction uroporphyrinogen I + 4 H(+) = coproporphyrinogen I + 4 CO2. It functions in the pathway porphyrin-containing compound metabolism; protoporphyrin-IX biosynthesis; coproporphyrinogen-III from 5-aminolevulinate: step 4/4. Functionally, catalyzes the sequential decarboxylation of the four acetate side chains of uroporphyrinogen to form coproporphyrinogen and participates in the fifth step in the heme biosynthetic pathway. Isomer I or isomer III of uroporphyrinogen may serve as substrate, but only coproporphyrinogen III can ultimately be converted to heme. In vitro also decarboxylates pentacarboxylate porphyrinogen I. This Danio rerio (Zebrafish) protein is Uroporphyrinogen decarboxylase.